Reading from the N-terminus, the 95-residue chain is Aspartyl/glutamyl-tRNA(Asn/Gln) amidotransferase subunit C (95 aa).

This sequence belongs to the GatC family. Heterotrimer of A, B and C subunits.

The enzyme catalyses L-glutamyl-tRNA(Gln) + L-glutamine + ATP + H2O = L-glutaminyl-tRNA(Gln) + L-glutamate + ADP + phosphate + H(+). It carries out the reaction L-aspartyl-tRNA(Asn) + L-glutamine + ATP + H2O = L-asparaginyl-tRNA(Asn) + L-glutamate + ADP + phosphate + 2 H(+). Allows the formation of correctly charged Asn-tRNA(Asn) or Gln-tRNA(Gln) through the transamidation of misacylated Asp-tRNA(Asn) or Glu-tRNA(Gln) in organisms which lack either or both of asparaginyl-tRNA or glutaminyl-tRNA synthetases. The reaction takes place in the presence of glutamine and ATP through an activated phospho-Asp-tRNA(Asn) or phospho-Glu-tRNA(Gln). The polypeptide is Aspartyl/glutamyl-tRNA(Asn/Gln) amidotransferase subunit C (Cytophaga hutchinsonii (strain ATCC 33406 / DSM 1761 / CIP 103989 / NBRC 15051 / NCIMB 9469 / D465)).